Here is a 562-residue protein sequence, read N- to C-terminus: NAD-dependent malic enzyme (562 aa).

Tyrosine 101 (proton donor) is an active-site residue. Arginine 154 is a binding site for NAD(+). The Proton acceptor role is filled by lysine 172. A divalent metal cation contacts are provided by glutamate 243, aspartate 244, and aspartate 267. NAD(+)-binding residues include aspartate 267 and asparagine 415.

Belongs to the malic enzymes family. In terms of assembly, homotetramer. The cofactor is Mg(2+). It depends on Mn(2+) as a cofactor.

It catalyses the reaction (S)-malate + NAD(+) = pyruvate + CO2 + NADH. The catalysed reaction is oxaloacetate + H(+) = pyruvate + CO2. In Shewanella woodyi (strain ATCC 51908 / MS32), this protein is NAD-dependent malic enzyme.